A 383-amino-acid polypeptide reads, in one-letter code: Deoxyguanosinetriphosphate triphosphohydrolase-like protein (383 aa).

Residues 62-198 form the HD domain; sequence RLTHSLEVST…AALADDISYI (137 aa).

This sequence belongs to the dGTPase family. Type 2 subfamily.

The polypeptide is Deoxyguanosinetriphosphate triphosphohydrolase-like protein (Rickettsia bellii (strain RML369-C)).